We begin with the raw amino-acid sequence, 1648 residues long: Kinesin-like protein KIF14 (1648 aa).

Positions 1 to 27 are disordered; the sequence is MSLHSTHNRNNSGDILDIPSSQNSSSL. The segment at 1-356 is required for PRC1-binding; sequence MSLHSTHNRN…AGKDPLKVEN (356 aa). Phosphoserine is present on residues Ser-12 and Ser-272. Thr-277 is subject to Phosphothreonine. Position 346 is a phosphoserine (Ser-346). Positions 356–737 are required for microtubule-binding with high affinity; that stretch reads NSQVTVAVRV…AAQRNSRNID (382 aa). One can recognise a Kinesin motor domain in the interval 358-701; it reads QVTVAVRVRP…LRYANQARLI (344 aa). ATP is bound at residue 447 to 454; the sequence is GQTGSGKS. The stretch at 705–791 forms a coiled coil; sequence AKVNEDMNAK…QETKELQKAG (87 aa). In terms of domain architecture, FHA spans 825–891; it reads TTVGKYKPNS…LRHGDRVILG (67 aa). The tract at residues 901–1648 is required for CIT-binding; it reads PVEVQKGKRP…ECTPSRIQWV (748 aa). Thr-915 is subject to Phosphothreonine. Residues 922–1079 adopt a coiled-coil conformation; that stretch reads KDFEFAKNEL…QNRNNRDKTF (158 aa). Phosphoserine is present on residues Ser-937 and Ser-1292. Coiled coils occupy residues 1332–1348 and 1468–1500; these read TNIA…VKKL and ENIF…VNRA. Residues 1600-1648 form a disordered region; it reads NTKEEHQQSKSSGIDGSKNKGVPKRVYELHGSSPAVSSEECTPSRIQWV. Polar residues predominate over residues 1633–1648; that stretch reads PAVSSEECTPSRIQWV.

The protein belongs to the TRAFAC class myosin-kinesin ATPase superfamily. Kinesin family. In terms of assembly, directly interacts with PRC1 within a complex also containing KIF4A, KIF20A and KIF23; targets to the central spindle. Directly interacts with CIT depending on the activation state of the kinase (stronger interaction with the kinase-dead form); targets to the midbody. Interacts with ARRB2; the interaction is detected in the nucleus upon OR1D2 stimulation. Interacts with AKT1; the interaction is detected in the plasma membrane upon INS stimulation and promotes AKT1 phosphorylation. Interacts with SVIL; at midbody during cytokinesis. Interacts with RADIL (via PDZ domain); recruits RADIL to the microtubule network restricting RADIL from interaction with activated RAP1A.

Its subcellular location is the nucleus. It localises to the cytoplasm. The protein localises to the cytoskeleton. The protein resides in the spindle. It is found in the midbody. Its function is as follows. Microtubule motor protein that binds to microtubules with high affinity through each tubulin heterodimer and has an ATPase activity. Plays a role in many processes like cell division, cytokinesis and also in cell proliferation and apoptosis. During cytokinesis, targets to central spindle and midbody through its interaction with PRC1 and CIT respectively. Regulates cell growth through regulation of cell cycle progression and cytokinesis. During cell cycle progression acts through SCF-dependent proteasomal ubiquitin-dependent protein catabolic process which controls CDKN1B degradation, resulting in positive regulation of cyclins, including CCNE1, CCND1 and CCNB1. During late neurogenesis, regulates the cerebellar, cerebral cortex and olfactory bulb development through regulation of apoptosis, cell proliferation and cell division. Also is required for chromosome congression and alignment during mitotic cell cycle process. Regulates cell spreading, focal adhesion dynamics, and cell migration through its interaction with RADIL resulting in regulation of RAP1A-mediated inside-out integrin activation by tethering RADIL on microtubules. This is Kinesin-like protein KIF14 from Homo sapiens (Human).